A 326-amino-acid chain; its full sequence is Nicotianamine synthase 2 (326 aa).

It belongs to the nicotianamine synthase (NAS)-like family. As to expression, expressed in roots.

The enzyme catalyses 3 S-adenosyl-L-methionine = nicotianamine + 3 S-methyl-5'-thioadenosine + 3 H(+). Functionally, synthesizes nicotianamine, a polyamine that is the first intermediate in the synthesis of the phytosiderophores of the mugineic acid type found in gramineae which serve as a sensor for the physiological iron status within the plant, and/or might be involved in the transport of iron. The chain is Nicotianamine synthase 2 (NAS2) from Oryza sativa subsp. japonica (Rice).